The chain runs to 117 residues: S-adenosylmethionine decarboxylase proenzyme (117 aa).

Catalysis depends on Ser63, which acts as the Schiff-base intermediate with substrate; via pyruvic acid. Ser63 is modified (pyruvic acid (Ser); by autocatalysis). The Proton acceptor; for processing activity role is filled by His68. Cys83 functions as the Proton donor; for catalytic activity in the catalytic mechanism.

The protein belongs to the prokaryotic AdoMetDC family. Type 1 subfamily. In terms of assembly, heterotetramer of two alpha and two beta chains arranged as a dimer of alpha/beta heterodimers. It depends on pyruvate as a cofactor. In terms of processing, is synthesized initially as an inactive proenzyme. Formation of the active enzyme involves a self-maturation process in which the active site pyruvoyl group is generated from an internal serine residue via an autocatalytic post-translational modification. Two non-identical subunits are generated from the proenzyme in this reaction, and the pyruvate is formed at the N-terminus of the alpha chain, which is derived from the carboxyl end of the proenzyme. The post-translation cleavage follows an unusual pathway, termed non-hydrolytic serinolysis, in which the side chain hydroxyl group of the serine supplies its oxygen atom to form the C-terminus of the beta chain, while the remainder of the serine residue undergoes an oxidative deamination to produce ammonia and the pyruvoyl group blocking the N-terminus of the alpha chain.

The catalysed reaction is S-adenosyl-L-methionine + H(+) = S-adenosyl 3-(methylsulfanyl)propylamine + CO2. It participates in amine and polyamine biosynthesis; S-adenosylmethioninamine biosynthesis; S-adenosylmethioninamine from S-adenosyl-L-methionine: step 1/1. Its function is as follows. Catalyzes the decarboxylation of S-adenosylmethionine to S-adenosylmethioninamine (dcAdoMet), the propylamine donor required for the synthesis of the polyamines spermine and spermidine from the diamine putrescine. The sequence is that of S-adenosylmethionine decarboxylase proenzyme from Methanococcus aeolicus (strain ATCC BAA-1280 / DSM 17508 / OCM 812 / Nankai-3).